The primary structure comprises 389 residues: Chalcone synthase 2 (389 aa).

55 to 62 (KFQRMCDK) provides a ligand contact to CoA. Catalysis depends on C164, which acts as the Acyl-thioester intermediate. Substrate-binding positions include T197 and 216-217 (GD). Residue A308 participates in CoA binding.

Belongs to the thiolase-like superfamily. Chalcone/stilbene synthases family. Homodimer.

The enzyme catalyses (E)-4-coumaroyl-CoA + 3 malonyl-CoA + 3 H(+) = 2',4,4',6'-tetrahydroxychalcone + 3 CO2 + 4 CoA. The protein operates within secondary metabolite biosynthesis; flavonoid biosynthesis. Its function is as follows. The primary product of this enzyme is 4,2',4',6'-tetrahydroxychalcone (also termed naringenin-chalcone or chalcone) which can under specific conditions spontaneously isomerize into naringenin. This is Chalcone synthase 2 (CHS2) from Medicago sativa (Alfalfa).